The sequence spans 757 residues: Protein transport protein SEC23-2 (757 aa).

Zn(2+)-binding residues include C56, C61, C80, and C83.

The protein belongs to the SEC23/SEC24 family. SEC23 subfamily. In terms of assembly, the COPII coat is composed of at least 5 proteins: the SEC23/24 complex, the SEC13/31 complex, and the protein SAR1.

The protein localises to the cytoplasm. It localises to the cytoplasmic vesicle. It is found in the COPII-coated vesicle membrane. The protein resides in the endoplasmic reticulum membrane. Its subcellular location is the golgi apparatus membrane. Component of the coat protein complex II (COPII) which promotes the formation of transport vesicles from the endoplasmic reticulum (ER). The coat has two main functions, the physical deformation of the endoplasmic reticulum membrane into vesicles and the selection of cargo molecules. The polypeptide is Protein transport protein SEC23-2 (SEC232) (Candida glabrata (strain ATCC 2001 / BCRC 20586 / JCM 3761 / NBRC 0622 / NRRL Y-65 / CBS 138) (Yeast)).